Here is a 165-residue protein sequence, read N- to C-terminus: V-type proton ATPase subunit c2 (165 aa).

The Lumenal portion of the chain corresponds to 1-12; that stretch reads MASTFSGDETAP. Residues 13-33 traverse the membrane as a helical segment; the sequence is FFGFLGAAAALVFSCMGAAYG. The Cytoplasmic segment spans residues 34-55; the sequence is TAKSGVGVASMGVMRPELVMKS. A helical transmembrane segment spans residues 56-76; the sequence is IVPVVMAGVLGIYGLIIAVII. At 77–95 the chain is on the lumenal side; it reads STGINPKAKSYYLFDGYAH. The helical transmembrane segment at 96-117 threads the bilayer; the sequence is LSSGLACGLAGLSAGMAIGIVG. The Cytoplasmic portion of the chain corresponds to 118-129; that stretch reads DAGVRANAQQPK. A helical membrane pass occupies residues 130–155; it reads LFVGMILILIFAEALALYGLIVGIIL. At 156-165 the chain is on the lumenal side; the sequence is SSRAGQSRAE.

It belongs to the V-ATPase proteolipid subunit family. As to quaternary structure, V-ATPase is a heteromultimeric enzyme composed of a peripheral catalytic V1 complex (components A to H) attached to an integral membrane V0 proton pore complex (components: a, c, c'', d and e). The proteolipid components c and c'' are present as a hexameric ring that forms the proton-conducting pore. In terms of tissue distribution, expressed in leaf, root, flower and silique, with lower expression in roots.

Its subcellular location is the vacuole membrane. Its function is as follows. Proton-conducting pore forming subunit of the membrane integral V0 complex of vacuolar ATPase. V-ATPase is responsible for acidifying a variety of intracellular compartments in eukaryotic cells. The sequence is that of V-type proton ATPase subunit c2 (VHA-c2) from Arabidopsis thaliana (Mouse-ear cress).